Reading from the N-terminus, the 385-residue chain is Mitochondrial fission regulator 2 (385 aa).

S2 carries the post-translational modification N-acetylserine. S119 bears the Phosphoserine mark. A disordered region spans residues 195 to 268; the sequence is SVDPDQLPGS…SHHSKSQRNK (74 aa). Pro residues predominate over residues 207–216; it reads SPPPPPPLPP. Positions 231-257 are enriched in polar residues; sequence PGSNNICDSDNPATEMSKQNPAANKTN. A phosphoserine mark is found at S291 and S328. Residues 331 to 363 form a disordered region; that stretch reads KENRSWESSPFSSPETSRFGHHISQSEGQRTKE. Residues 336 to 346 show a composition bias toward polar residues; the sequence is WESSPFSSPET.

It belongs to the MTFR1 family.

It localises to the mitochondrion. May play a role in mitochondrial aerobic respiration essentially in the testis. Can also promote mitochondrial fission. The protein is Mitochondrial fission regulator 2 (MTFR2) of Homo sapiens (Human).